Reading from the N-terminus, the 201-residue chain is Natural cytotoxicity triggering receptor 3 (201 aa).

The N-terminal stretch at 1–18 (MAWMLLLILIMVHPGSCA) is a signal peptide. The region spanning 19–126 (LWVSQPPEIR…VGTGNGTRLV (108 aa)) is the Ig-like domain. The Extracellular segment spans residues 19–135 (LWVSQPPEIR…VVEKEHPQLG (117 aa)). A disulfide bridge connects residues Cys39 and Cys108. Residues Asn42 and Asn121 are each glycosylated (N-linked (GlcNAc...) asparagine). The helical transmembrane segment at 136–156 (AGTVLLLRAGFYAVSFLSVAV) threads the bilayer. At 157-201 (GSTVYYQGKCLTWKGPRRQLPAVVPAPLPPPCGSSAQLLPPVPGG) the chain is on the cytoplasmic side.

This sequence belongs to the natural cytotoxicity receptor (NCR) family. In terms of assembly, homodimer in the unliganted form. Interacts with CD3Z. Interacts with and is activated by binding to NCR3LG1. Interacts with and is activated by binding to BAG6. Interacts with and is inhibited by binding to LGALS3.

The protein resides in the cell membrane. Cell membrane receptor of natural killer/NK cells that is activated by binding of extracellular ligands including BAG6 and NCR3LG1. Stimulates NK cells cytotoxicity toward neighboring cells producing these ligands. It controls, for instance, NK cells cytotoxicity against tumor cells. Engagement of NCR3 by BAG6 also promotes myeloid dendritic cells (DC) maturation, both through killing DCs that did not acquire a mature phenotype, and inducing the release by NK cells of TNFA and IFNG that promote DC maturation. This is Natural cytotoxicity triggering receptor 3 (NCR3) from Pan troglodytes (Chimpanzee).